The following is a 367-amino-acid chain: Phosphoribosylaminoimidazole-succinocarboxamide synthase (367 aa).

It belongs to the SAICAR synthetase family.

The catalysed reaction is 5-amino-1-(5-phospho-D-ribosyl)imidazole-4-carboxylate + L-aspartate + ATP = (2S)-2-[5-amino-1-(5-phospho-beta-D-ribosyl)imidazole-4-carboxamido]succinate + ADP + phosphate + 2 H(+). It participates in purine metabolism; IMP biosynthesis via de novo pathway; 5-amino-1-(5-phospho-D-ribosyl)imidazole-4-carboxamide from 5-amino-1-(5-phospho-D-ribosyl)imidazole-4-carboxylate: step 1/2. This is Phosphoribosylaminoimidazole-succinocarboxamide synthase from Shewanella baltica (strain OS155 / ATCC BAA-1091).